Reading from the N-terminus, the 156-residue chain is Endoribonuclease YbeY (156 aa).

Histidine 122, histidine 126, and histidine 132 together coordinate Zn(2+).

Belongs to the endoribonuclease YbeY family. Zn(2+) is required as a cofactor.

It localises to the cytoplasm. Functionally, single strand-specific metallo-endoribonuclease involved in late-stage 70S ribosome quality control and in maturation of the 3' terminus of the 16S rRNA. This Syntrophomonas wolfei subsp. wolfei (strain DSM 2245B / Goettingen) protein is Endoribonuclease YbeY.